The sequence spans 393 residues: Autophagy-related protein 18c (393 aa).

4 WD repeats span residues 27 to 65 (KEEA…ETFR), 70 to 114 (DGGF…CISE), 199 to 239 (AHDS…RLQE), and 244 to 283 (VDRA…VGED).

Belongs to the WD repeat PROPPIN family. As to quaternary structure, component of the PI(3,5)P2 regulatory complex at least composed of ATG18, SAC/FIG4, FAB1 and VAC14. Expressed in roots, stems, flowers and leaves.

It is found in the preautophagosomal structure membrane. The protein resides in the vacuole membrane. Its function is as follows. The PI(3,5)P2 regulatory complex regulates both the synthesis and turnover of phosphatidylinositol 3,5-bisphosphate (PtdIns(3,5)P2). Required for autophagy. The protein is Autophagy-related protein 18c (ATG18C) of Arabidopsis thaliana (Mouse-ear cress).